The sequence spans 475 residues: Sulfate adenylyltransferase subunit 1 (475 aa).

Residues 25 to 239 (KSLLRFLTCG…EVLETVEIQR (215 aa)) form the tr-type G domain. The interval 34-41 (GSVDDGKS) is G1. 34 to 41 (GSVDDGKS) contributes to the GTP binding site. The segment at 92–96 (GITID) is G2. A G3 region spans residues 113-116 (DTPG). GTP contacts are provided by residues 113–117 (DTPGH) and 168–171 (NKMD). Residues 168–171 (NKMD) are G4. The tract at residues 206 to 208 (SAL) is G5.

It belongs to the TRAFAC class translation factor GTPase superfamily. Classic translation factor GTPase family. CysN/NodQ subfamily. As to quaternary structure, heterodimer composed of CysD, the smaller subunit, and CysN.

It carries out the reaction sulfate + ATP + H(+) = adenosine 5'-phosphosulfate + diphosphate. The protein operates within sulfur metabolism; hydrogen sulfide biosynthesis; sulfite from sulfate: step 1/3. Functionally, with CysD forms the ATP sulfurylase (ATPS) that catalyzes the adenylation of sulfate producing adenosine 5'-phosphosulfate (APS) and diphosphate, the first enzymatic step in sulfur assimilation pathway. APS synthesis involves the formation of a high-energy phosphoric-sulfuric acid anhydride bond driven by GTP hydrolysis by CysN coupled to ATP hydrolysis by CysD. This Citrobacter koseri (strain ATCC BAA-895 / CDC 4225-83 / SGSC4696) protein is Sulfate adenylyltransferase subunit 1.